A 147-amino-acid polypeptide reads, in one-letter code: NADH-ubiquinone oxidoreductase chain 3 (147 aa).

3 consecutive transmembrane segments (helical) span residues 6 to 26, 60 to 80, and 84 to 104; these read LFIL…LVFA, AICF…VGSL, and TFYS…GFVF.

The protein belongs to the complex I subunit 3 family.

The protein localises to the mitochondrion membrane. It carries out the reaction a ubiquinone + NADH + 5 H(+)(in) = a ubiquinol + NAD(+) + 4 H(+)(out). Functionally, core subunit of the mitochondrial membrane respiratory chain NADH dehydrogenase (Complex I) that is believed to belong to the minimal assembly required for catalysis. Complex I functions in the transfer of electrons from NADH to the respiratory chain. The immediate electron acceptor for the enzyme is believed to be ubiquinone. In Neurospora crassa (strain ATCC 24698 / 74-OR23-1A / CBS 708.71 / DSM 1257 / FGSC 987), this protein is NADH-ubiquinone oxidoreductase chain 3 (ndh-3).